A 185-amino-acid chain; its full sequence is Large ribosomal subunit protein uL5 (185 aa).

Belongs to the universal ribosomal protein uL5 family. Part of the 50S ribosomal subunit; part of the 5S rRNA/L5/L18/L25 subcomplex. Contacts the 5S rRNA and the P site tRNA. Forms a bridge to the 30S subunit in the 70S ribosome.

Functionally, this is one of the proteins that bind and probably mediate the attachment of the 5S RNA into the large ribosomal subunit, where it forms part of the central protuberance. In the 70S ribosome it contacts protein S13 of the 30S subunit (bridge B1b), connecting the 2 subunits; this bridge is implicated in subunit movement. Contacts the P site tRNA; the 5S rRNA and some of its associated proteins might help stabilize positioning of ribosome-bound tRNAs. This chain is Large ribosomal subunit protein uL5, found in Phocaeicola vulgatus (strain ATCC 8482 / DSM 1447 / JCM 5826 / CCUG 4940 / NBRC 14291 / NCTC 11154) (Bacteroides vulgatus).